Here is a 469-residue protein sequence, read N- to C-terminus: Adenosylhomocysteinase (469 aa).

Substrate is bound by residues Thr60, Asp135, and Glu195. 196 to 198 (TTT) contributes to the NAD(+) binding site. Residues Lys225 and Asp229 each coordinate substrate. NAD(+)-binding positions include Asn230, 259 to 264 (GYGDVG), Glu282, Asn317, 338 to 340 (IGH), and Asn383.

This sequence belongs to the adenosylhomocysteinase family. NAD(+) serves as cofactor.

The protein resides in the cytoplasm. The catalysed reaction is S-adenosyl-L-homocysteine + H2O = L-homocysteine + adenosine. The protein operates within amino-acid biosynthesis; L-homocysteine biosynthesis; L-homocysteine from S-adenosyl-L-homocysteine: step 1/1. In terms of biological role, may play a key role in the regulation of the intracellular concentration of adenosylhomocysteine. The protein is Adenosylhomocysteinase of Maricaulis maris (strain MCS10) (Caulobacter maris).